The primary structure comprises 617 residues: ATP-dependent RNA helicase DBP1 (617 aa).

The disordered stretch occupies residues 1–90; that stretch reads MADLPQKVSN…TSANYNRGGS (90 aa). Polar residues predominate over residues 7–17; it reads KVSNLSINNKE. Over residues 38–58 the composition is skewed to basic and acidic residues; the sequence is PSFERSTPKQEDKVTGGDFFR. Polar residues predominate over residues 79–90; that stretch reads GGTSANYNRGGS. Positions 154-182 match the Q motif motif; the sequence is LDFSSPPLDELLMENIKLASFTKPTPVQK. Residues 185 to 374 form the Helicase ATP-binding domain; that stretch reads IPIVTKGRDL…RDFLDNYIFL (190 aa). 198–205 lines the ATP pocket; it reads AQTGSGKT. A DEAD box motif is present at residues 318–321; it reads DEAD. The region spanning 385–545 is the Helicase C-terminal domain; the sequence is NITQRILYVD…EVPTFLSDLS (161 aa). The interval 542–617 is disordered; it reads SDLSRQNSRG…GYGNSNASWW (76 aa). The span at 580–594 shows a compositional bias: polar residues; it reads FGSTRPRNTGTSNWG.

Belongs to the DEAD box helicase family. DDX3/DED1 subfamily.

It is found in the cytoplasm. It carries out the reaction ATP + H2O = ADP + phosphate + H(+). ATP-binding RNA helicase involved in translation initiation. Remodels RNA in response to ADP and ATP concentrations by facilitating disruption, but also formation of RNA duplexes. Redundant to DED1, may be required in conditions in which DED1 expression is decreased. The chain is ATP-dependent RNA helicase DBP1 (DBP1) from Saccharomyces cerevisiae (strain YJM789) (Baker's yeast).